The following is a 184-amino-acid chain: ATP synthase subunit b (184 aa).

A helical membrane pass occupies residues 19-39 (IIVGVILVLLLTWLIAKAVVP).

The protein belongs to the ATPase B chain family. In terms of assembly, F-type ATPases have 2 components, F(1) - the catalytic core - and F(0) - the membrane proton channel. F(1) has five subunits: alpha(3), beta(3), gamma(1), delta(1), epsilon(1). F(0) has three main subunits: a(1), b(2) and c(10-14). The alpha and beta chains form an alternating ring which encloses part of the gamma chain. F(1) is attached to F(0) by a central stalk formed by the gamma and epsilon chains, while a peripheral stalk is formed by the delta and b chains.

The protein localises to the cell membrane. F(1)F(0) ATP synthase produces ATP from ADP in the presence of a proton or sodium gradient. F-type ATPases consist of two structural domains, F(1) containing the extramembraneous catalytic core and F(0) containing the membrane proton channel, linked together by a central stalk and a peripheral stalk. During catalysis, ATP synthesis in the catalytic domain of F(1) is coupled via a rotary mechanism of the central stalk subunits to proton translocation. Its function is as follows. Component of the F(0) channel, it forms part of the peripheral stalk, linking F(1) to F(0). The chain is ATP synthase subunit b from Cutibacterium acnes (strain DSM 16379 / KPA171202) (Propionibacterium acnes).